Reading from the N-terminus, the 365-residue chain is DNA repair protein rhp51 (365 aa).

Positions 1-25 (MADTEVEMQVSAADTNNNENGQAQS) are disordered. Over residues 12 to 25 (AADTNNNENGQAQS) the composition is skewed to polar residues. 149-156 (GEFRTGKS) lines the ATP pocket.

It belongs to the RecA family. RAD51 subfamily. As to quaternary structure, interacts with rad22, rad54, rdh54, rhp54, rti1, swi2 and swi5. Forms homooiligomers.

It localises to the nucleus. In terms of biological role, required both for recombination and for the repair of DNA damage caused by X-rays. Binds to single and double-stranded DNA, in the presence of magnesium, and exhibits DNA-dependent ATPase activity. Promotes DNA strand annealing and strand exchange via DNA recombinase activity and forms helical nucleoprotein filaments. This is DNA repair protein rhp51 (rhp51) from Schizosaccharomyces pombe (strain 972 / ATCC 24843) (Fission yeast).